The primary structure comprises 210 residues: CLAVATA3/ESR (CLE)-related protein 4D (210 aa).

Residues 1-21 (MAKNAMLCLLILSVVLALAFA) form the signal peptide. Positions 21-83 (ATNKKDDEEP…SNQLPNNNWM (63 aa)) are required for secretion from the host cytoplasm to the host apoplasm. 2 N-linked (GlcNAc...) asparagine glycosylation sites follow: asparagine 32 and asparagine 59. A disordered region spans residues 115–210 (RRKTGTHSQR…APAGPDPIHH (96 aa)). Basic and acidic residues-rich tracts occupy residues 125 to 137 (HHEETTLEQEKRG), 144 to 158 (PIHHQDTTFEQEKRG), 165 to 179 (PIHHQDTTLEQEKRV), and 186 to 200 (PIHHQDTKFEQEKRG). One copy of the A-1 repeat lies at 127–135 (EETTLEQEK). The 4 X approximate repeat A stretch occupies residues 129-198 (TTLEQEKRGA…HQDTKFEQEK (70 aa)). A CLE-1 repeat occupies 136–147 (RGAPAGPDPIHH). The tract at residues 136–210 (RGAPAGPDPI…APAGPDPIHH (75 aa)) is 4 X approximate repeat CLE. One copy of the A-2 repeat lies at 148–156 (QDTTFEQEK). The stretch at 157-168 (RGAPAGPDPIHH) is one CLE-2 repeat. One copy of the A-3 repeat lies at 169 to 177 (QDTTLEQEK). The CLE-3 repeat unit spans residues 178-189 (RVAGAGPDPIHH). The stretch at 190 to 198 (QDTKFEQEK) is one A-4 repeat. Residues 199–210 (RGAPAGPDPIHH) form a CLE-4 repeat.

This sequence belongs to the CLV3/ESR signal peptide family. Highly expressed exclusively within the dorsal esophageal gland cell during syncytium formation in host plants.

Its subcellular location is the secreted. The protein localises to the host cytoplasm. The protein resides in the host extracellular space. It is found in the extracellular space. It localises to the apoplast. Functionally, mimics host plant CLE extracellular signal peptides that regulate cell fate. May play a role in the differentiation or division of feeding cells (syncytia) induced in plant roots during infection. The polypeptide is CLAVATA3/ESR (CLE)-related protein 4D (CLE-4D) (Globodera rostochiensis (Golden nematode worm)).